We begin with the raw amino-acid sequence, 211 residues long: MEKKKKLILFDFDSTLVNNETIDEIAREAGVEEEVKKITKEAMEGKLNFEQSLRKRVSLLKDLPIEKVEKAIKRITPTEGAEETIKELKNRGYVVAVVSGGFDIAVNKIKEKLGLDYAFANRLIVKDGKLTGDVEGEVLKENAKGEILEKIAKIEGINLEDTVAVGDGANDISMFKKAGLKIAFCAKPILKEKADICIEKRDLREILKYIK.

Asp-11 functions as the Nucleophile in the catalytic mechanism. The Mg(2+) site is built by Asp-11 and Asp-13. Asp-13 acts as the Proton donor in catalysis. Residues Glu-20, Arg-56, 99–100 (SG), and Lys-144 contribute to the substrate site. Mg(2+) is bound at residue Asp-167. Asn-170 lines the substrate pocket.

It belongs to the HAD-like hydrolase superfamily. SerB family. The cofactor is Mg(2+).

The enzyme catalyses O-phospho-L-serine + H2O = L-serine + phosphate. It carries out the reaction O-phospho-D-serine + H2O = D-serine + phosphate. The protein operates within amino-acid biosynthesis; L-serine biosynthesis; L-serine from 3-phospho-D-glycerate: step 3/3. This is Phosphoserine phosphatase from Methanocaldococcus jannaschii (strain ATCC 43067 / DSM 2661 / JAL-1 / JCM 10045 / NBRC 100440) (Methanococcus jannaschii).